A 447-amino-acid chain; its full sequence is MELETTKYFILAFTHKSMSLEMREKLAINSPAILKEFLQTIKNYCPNIKECMVLSTCNRFEIYASLKHNTHADEQKNALLKILAQNKKMSVSDLEKCVLMSTDESAVHHVFSVCSSLDSLVVGETQITGQMKNAYKFAFEEKFCSKDLTRLLHFAFKCAAKVRNLTGISKQGVSISSVAVKEALSIFEKEKIEDKKALVIGLGEMSQLVIKHLLNKQFEVLVLGRNAAKFEDFLKELEEPKKVSFQNIENLNAYINAYELLFCATSSPNFIVQNCMVKETIFRRFWFDLAVPRNIEKPIFNNIFLYSVDDLEPMVRENVENRQESRMKAYEIVGLATMEFYQWIQSLEVEPLIKDLRELARISAQKELQKAVKKRYVPKEYESNIEKILHNAFNAFLHHPTIALKKNAQKEESDVLVGTIKNLFNLDKSSTNHAQNLNLYKCEYYEE.

Substrate-binding positions include 56 to 59 (TCNR), Ser-119, 124 to 126 (ETQ), and Gln-130. Cys-57 acts as the Nucleophile in catalysis. Residue 201-206 (GLGEMS) participates in NADP(+) binding.

The protein belongs to the glutamyl-tRNA reductase family. In terms of assembly, homodimer.

The enzyme catalyses (S)-4-amino-5-oxopentanoate + tRNA(Glu) + NADP(+) = L-glutamyl-tRNA(Glu) + NADPH + H(+). The protein operates within porphyrin-containing compound metabolism; protoporphyrin-IX biosynthesis; 5-aminolevulinate from L-glutamyl-tRNA(Glu): step 1/2. In terms of biological role, catalyzes the NADPH-dependent reduction of glutamyl-tRNA(Glu) to glutamate 1-semialdehyde (GSA). In Helicobacter acinonychis (strain Sheeba), this protein is Glutamyl-tRNA reductase.